Here is a 314-residue protein sequence, read N- to C-terminus: tRNA pseudouridine synthase B (314 aa).

Asp-47 functions as the Nucleophile in the catalytic mechanism.

This sequence belongs to the pseudouridine synthase TruB family. Type 1 subfamily.

The enzyme catalyses uridine(55) in tRNA = pseudouridine(55) in tRNA. In terms of biological role, responsible for synthesis of pseudouridine from uracil-55 in the psi GC loop of transfer RNAs. This is tRNA pseudouridine synthase B from Vibrio vulnificus (strain CMCP6).